A 184-amino-acid chain; its full sequence is NADH-quinone oxidoreductase subunit B (184 aa).

[4Fe-4S] cluster-binding residues include cysteine 37, cysteine 38, cysteine 103, and cysteine 132.

Belongs to the complex I 20 kDa subunit family. NDH-1 is composed of 14 different subunits. Subunits NuoB, C, D, E, F, and G constitute the peripheral sector of the complex. [4Fe-4S] cluster is required as a cofactor.

It is found in the cell membrane. The enzyme catalyses a quinone + NADH + 5 H(+)(in) = a quinol + NAD(+) + 4 H(+)(out). Its function is as follows. NDH-1 shuttles electrons from NADH, via FMN and iron-sulfur (Fe-S) centers, to quinones in the respiratory chain. The immediate electron acceptor for the enzyme in this species is believed to be a menaquinone. Couples the redox reaction to proton translocation (for every two electrons transferred, four hydrogen ions are translocated across the cytoplasmic membrane), and thus conserves the redox energy in a proton gradient. This chain is NADH-quinone oxidoreductase subunit B, found in Beutenbergia cavernae (strain ATCC BAA-8 / DSM 12333 / CCUG 43141 / JCM 11478 / NBRC 16432 / NCIMB 13614 / HKI 0122).